Consider the following 498-residue polypeptide: Oligopeptide transport system permease protein AmiC (498 aa).

The next 6 membrane-spanning stretches (helical) occupy residues 12 to 32 (SLVSIFLVTTLTYTIIYTLVP), 279 to 299 (MIVSSAITGLIGLVLAYALAV), 316 to 336 (LSTGALTFLLALPTIALVYIV), 359 to 379 (SYVLPAVILGLLGAPGTAIWI), 415 to 435 (MVPLVSGIPAAIIGVIGGATL), and 461 to 481 (VVGLVFIFTCISIFSRLLGDI). Residues 280-479 (IVSSAITGLI…CISIFSRLLG (200 aa)) enclose the ABC transmembrane type-1 domain.

It belongs to the binding-protein-dependent transport system permease family. OppBC subfamily.

The protein localises to the cell membrane. In terms of biological role, part of the binding-protein-dependent transport system for oligopeptides; probably responsible for the translocation of the substrate across the membrane. The sequence is that of Oligopeptide transport system permease protein AmiC (amiC) from Streptococcus pneumoniae serotype 4 (strain ATCC BAA-334 / TIGR4).